Here is a 328-residue protein sequence, read N- to C-terminus: Fructose-1,6-bisphosphatase class 1 (328 aa).

Glu-89, Asp-110, Leu-112, and Asp-113 together coordinate Mg(2+). Residues Asn-206, Tyr-234, 252–254 (YLY), and Lys-264 contribute to the substrate site. Residue Glu-270 coordinates Mg(2+).

The protein belongs to the FBPase class 1 family. Homotetramer. Mg(2+) is required as a cofactor.

Its subcellular location is the cytoplasm. It catalyses the reaction beta-D-fructose 1,6-bisphosphate + H2O = beta-D-fructose 6-phosphate + phosphate. It functions in the pathway carbohydrate biosynthesis; gluconeogenesis. The polypeptide is Fructose-1,6-bisphosphatase class 1 (Wigglesworthia glossinidia brevipalpis).